The chain runs to 521 residues: uncharacterized protein (521 aa).

The N-terminal stretch at 1–22 is a signal peptide; sequence MGFKLKGFGFLTLFASQAFLTA. A lipid anchor (N-palmitoyl cysteine) is attached at Cys-23. Cys-23 carries the S-diacylglycerol cysteine lipid modification.

The protein belongs to the MG067/MG068/MG395 family.

The protein localises to the cell membrane. This is an uncharacterized protein from Mycoplasma pneumoniae (strain ATCC 29342 / M129 / Subtype 1) (Mycoplasmoides pneumoniae).